We begin with the raw amino-acid sequence, 219 residues long: Phosphatidylserine decarboxylase proenzyme (219 aa).

Serine 188 functions as the Schiff-base intermediate with substrate; via pyruvic acid in the catalytic mechanism. Pyruvic acid (Ser); by autocatalysis is present on serine 188.

It belongs to the phosphatidylserine decarboxylase family. PSD-A subfamily. Heterodimer of a large membrane-associated beta subunit and a small pyruvoyl-containing alpha subunit. It depends on pyruvate as a cofactor. Is synthesized initially as an inactive proenzyme. Formation of the active enzyme involves a self-maturation process in which the active site pyruvoyl group is generated from an internal serine residue via an autocatalytic post-translational modification. Two non-identical subunits are generated from the proenzyme in this reaction, and the pyruvate is formed at the N-terminus of the alpha chain, which is derived from the carboxyl end of the proenzyme. The post-translation cleavage follows an unusual pathway, termed non-hydrolytic serinolysis, in which the side chain hydroxyl group of the serine supplies its oxygen atom to form the C-terminus of the beta chain, while the remainder of the serine residue undergoes an oxidative deamination to produce ammonia and the pyruvoyl prosthetic group on the alpha chain.

The protein localises to the cell membrane. It catalyses the reaction a 1,2-diacyl-sn-glycero-3-phospho-L-serine + H(+) = a 1,2-diacyl-sn-glycero-3-phosphoethanolamine + CO2. It participates in phospholipid metabolism; phosphatidylethanolamine biosynthesis; phosphatidylethanolamine from CDP-diacylglycerol: step 2/2. Catalyzes the formation of phosphatidylethanolamine (PtdEtn) from phosphatidylserine (PtdSer). In Ruegeria pomeroyi (strain ATCC 700808 / DSM 15171 / DSS-3) (Silicibacter pomeroyi), this protein is Phosphatidylserine decarboxylase proenzyme.